Here is a 315-residue protein sequence, read N- to C-terminus: Universal stress protein E (315 aa).

This sequence belongs to the universal stress protein A family.

It localises to the cytoplasm. Required for resistance to DNA-damaging agents. This is Universal stress protein E (uspE) from Salmonella typhi.